An 81-amino-acid polypeptide reads, in one-letter code: Large ribosomal subunit protein bL31 (81 aa).

The protein belongs to the bacterial ribosomal protein bL31 family. Type A subfamily. Part of the 50S ribosomal subunit.

Its function is as follows. Binds the 23S rRNA. The chain is Large ribosomal subunit protein bL31 (rpmE) from Fusobacterium nucleatum subsp. nucleatum (strain ATCC 25586 / DSM 15643 / BCRC 10681 / CIP 101130 / JCM 8532 / KCTC 2640 / LMG 13131 / VPI 4355).